The sequence spans 1105 residues: Ran-binding protein 6 (1105 aa).

N-acetylalanine is present on Ala2. HEAT repeat units follow at residues 219 to 257, 361 to 399, 402 to 440, and 444 to 483; these read FKDF…TVPK, KVVL…GCHQ, ESIL…DFAP, and KKFH…DCPK. A ran-GTP binding region spans residues 333 to 383; it reads DEMEEDDFDSNAVAAESALDRLACGLGGKVVLPMTKEHIMQMLQSPDWKYR. Residues 806-842 are a coiled coil; that stretch reads KAKLEGHFKNQELRQVKRQEENYDQQVEMSLQDEDEC. HEAT repeat units lie at residues 866-905, 908-946, and 949-987; these read LPWF…HCSP, FKYV…FGGD, and RSLC…IGKI.

The protein belongs to the importin beta family.

It is found in the cytoplasm. It localises to the nucleus. In terms of biological role, may function in nuclear protein import as nuclear transport receptor. This is Ran-binding protein 6 (RANBP6) from Homo sapiens (Human).